The following is a 23-amino-acid chain: Magainin-R2 (23 aa).

As to expression, expressed by the skin glands.

Its subcellular location is the secreted. In terms of biological role, antimicrobial peptide. This chain is Magainin-R2, found in Xenopus ruwenzoriensis (Uganda clawed frog).